Consider the following 391-residue polypeptide: S-adenosylmethionine synthase (391 aa).

The tract at residues 1–20 (MPRSDYLFTSESVSEGHPDK) is disordered. His17 lines the ATP pocket. Mg(2+) is bound at residue Asp19. Glu45 provides a ligand contact to K(+). Residues Glu58 and Gln102 each contribute to the L-methionine site. The interval 102 to 112 (QSADIAQGVDA) is flexible loop. ATP-binding positions include 169 to 171 (DAK), 235 to 236 (KF), Asp244, 250 to 251 (RK), Ala267, and Lys271. L-methionine is bound at residue Asp244. Residue Lys275 coordinates L-methionine.

Belongs to the AdoMet synthase family. Homotetramer; dimer of dimers. Mg(2+) serves as cofactor. The cofactor is K(+).

The protein resides in the cytoplasm. The catalysed reaction is L-methionine + ATP + H2O = S-adenosyl-L-methionine + phosphate + diphosphate. It functions in the pathway amino-acid biosynthesis; S-adenosyl-L-methionine biosynthesis; S-adenosyl-L-methionine from L-methionine: step 1/1. Functionally, catalyzes the formation of S-adenosylmethionine (AdoMet) from methionine and ATP. The overall synthetic reaction is composed of two sequential steps, AdoMet formation and the subsequent tripolyphosphate hydrolysis which occurs prior to release of AdoMet from the enzyme. This Methylorubrum populi (strain ATCC BAA-705 / NCIMB 13946 / BJ001) (Methylobacterium populi) protein is S-adenosylmethionine synthase.